Reading from the N-terminus, the 113-residue chain is Protein INCREASED RESISTANCE TO MYZUS PERSICAE 1 (113 aa).

The FLZ-type zinc finger occupies 56–100 (DFLKTCSLCNRSLCHHRDIYMYRGNNAFCSLECREKQIKLDEKKA).

The protein belongs to the FLZ family. Interacts with KIN10 and KIN11 via its FLZ-type zinc finger domain. Interacts with KINB3 via its N-terminal part. Interacts with GEBP.

The protein localises to the nucleus. It is found in the cytoplasm. In terms of biological role, may act as an adapter to facilitate the interaction of SnRK1 complex with effector proteins, conferring tissue- and stimulus-type specific differences in the SnRK1 regulation pathway. This chain is Protein INCREASED RESISTANCE TO MYZUS PERSICAE 1, found in Arabidopsis thaliana (Mouse-ear cress).